The following is a 239-amino-acid chain: Probable transcriptional regulatory protein VC_A0006 (239 aa).

The protein belongs to the TACO1 family.

Its subcellular location is the cytoplasm. This chain is Probable transcriptional regulatory protein VC_A0006, found in Vibrio cholerae serotype O1 (strain ATCC 39315 / El Tor Inaba N16961).